Here is a 468-residue protein sequence, read N- to C-terminus: MAARLVSRCGAVRAAPHSGPLVSWRRWSGASTDTVYDVVVSGGGLVGAAMACALGYDIHFHDKKILLLEAGPKKVLEKLSETYSNRVSSISPGSATLLSSFGAWDHICNMRYRAFRRMQVWDACSEALIMFDKDNLDDMGYIVENDVIMHALTKQLEAVSDRVTVLYRSKAIRYTWPCPFPMADSSPWVHITLGDGSTFQTKLLIGADGHNSGVRQAVGIQNVSWNYDQSAVVATLHLSEATENNVAWQRFLPSGPIALLPLSDTLSSLVWSTSHEHAAELVSMDEEKFVDAVNSAFWSDADHTDFIDTAGAMLQYAVSLLKPTKVSARQLPPSVARVDAKSRVLFPLGLGHAAEYVRPRVALIGDAAHRVHPLAGQGVNMGFGDISSLAHHLSTAAFNGKDLGSVSHLTGYETERQRHNTALLAATDLLKRLYSTSASPLVLLRTWGLQATNAVSPLKEQIMAFASK.

The N-terminal 28 residues, methionine 1–serine 28, are a transit peptide targeting the mitochondrion.

This sequence belongs to the UbiH/COQ6 family. Component of a multi-subunit COQ enzyme complex, composed of at least COQ3, COQ4, COQ5, COQ6, COQ7 and COQ9. Interacts with COQ8B and COQ7. Requires FAD as cofactor. In terms of tissue distribution, widely expressed.

Its subcellular location is the mitochondrion inner membrane. The protein resides in the golgi apparatus. The protein localises to the cell projection. It catalyses the reaction 4-hydroxy-3-(all-trans-decaprenyl)benzoate + 2 reduced [2Fe-2S]-[ferredoxin] + O2 + 2 H(+) = 3,4-dihydroxy-5-(all-trans-decaprenyl)benzoate + 2 oxidized [2Fe-2S]-[ferredoxin] + H2O. The catalysed reaction is 2-methoxy-6-(all-trans-decaprenyl)phenol + 2 reduced [2Fe-2S]-[ferredoxin] + O2 + 2 H(+) = 2-methoxy-6-(all-trans-decaprenyl)benzene-1,4-diol + 2 oxidized [2Fe-2S]-[ferredoxin] + H2O. Its pathway is cofactor biosynthesis; ubiquinone biosynthesis. Its function is as follows. FAD-dependent monooxygenase required for two non-consecutive steps during ubiquinone biosynthesis. Required for the C5-ring hydroxylation during ubiquinone biosynthesis by catalyzing the hydroxylation of 4-hydroxy-3-(all-trans-decaprenyl)benzoic acid to 3,4-dihydroxy-5-(all-trans-decaprenyl)benzoic acid. Also acts downstream of COQ4, for the C1-hydroxylation during ubiquinone biosynthesis by catalyzing the hydroxylation of 2-methoxy-6-(all-trans-decaprenyl)phenol to 2-methoxy-6-(all-trans-decaprenyl)benzene-1,4-diol. The electrons required for the hydroxylation reaction are funneled indirectly to COQ6 from NADPH via a ferredoxin/ferredoxin reductase system composed of FDX2 and FDXR. The sequence is that of Ubiquinone biosynthesis monooxygenase COQ6, mitochondrial from Homo sapiens (Human).